Reading from the N-terminus, the 170-residue chain is Adenine phosphoribosyltransferase (170 aa).

This sequence belongs to the purine/pyrimidine phosphoribosyltransferase family. Homodimer.

The protein resides in the cytoplasm. It carries out the reaction AMP + diphosphate = 5-phospho-alpha-D-ribose 1-diphosphate + adenine. The protein operates within purine metabolism; AMP biosynthesis via salvage pathway; AMP from adenine: step 1/1. Its function is as follows. Catalyzes a salvage reaction resulting in the formation of AMP, that is energically less costly than de novo synthesis. This chain is Adenine phosphoribosyltransferase, found in Thermosipho africanus (strain TCF52B).